Here is a 147-residue protein sequence, read N- to C-terminus: Signal peptidase complex subunit 3 (147 aa).

The Cytoplasmic segment spans residues 1 to 6 (MHSWVQ). The chain crosses the membrane as a helical; Signal-anchor for type II membrane protein span at residues 7–29 (RLLTTATTAALLLLAACCAASAL). Residues 30 to 147 (DAFHVPSVQA…EFNLPDSYTS (118 aa)) are Lumenal-facing.

The protein belongs to the SPCS3 family. In terms of assembly, component of the signal peptidase complex (SPC) composed of a catalytic subunit SEC11 and three accessory subunits SPCS1, SPCS2 and SPCS3. The complex induces a local thinning of the ER membrane which is used to measure the length of the signal peptide (SP) h-region of protein substrates. This ensures the selectivity of the complex towards h-regions shorter than 18-20 amino acids.

The protein resides in the endoplasmic reticulum membrane. Its function is as follows. Essential component of the signal peptidase complex (SPC) which catalyzes the cleavage of N-terminal signal sequences from nascent proteins as they are translocated into the lumen of the endoplasmic reticulum. Essential for the SPC catalytic activity, possibly by stabilizing and positioning the active center of the complex close to the lumenal surface. The protein is Signal peptidase complex subunit 3 of Oryza sativa subsp. japonica (Rice).